The chain runs to 25 residues: Brevinin-2R (25 aa).

Cysteine 19 and cysteine 25 are disulfide-bonded.

Belongs to the frog skin active peptide (FSAP) family. Brevinin subfamily. As to expression, expressed by the skin glands.

It is found in the secreted. Cytotoxic to cancer cells, acts via the activation of the lysosomal-mitochondrial death pathway and autophagy-like cell death. Does not show significant hemolytic activity. The polypeptide is Brevinin-2R (Pelophylax ridibundus (Marsh frog)).